The following is a 297-amino-acid chain: Iron/alpha-ketoglutarate-dependent dioxygenase ausU (297 aa).

Positions 130, 132, and 206 each coordinate Fe cation.

The protein belongs to the PhyH family. As to quaternary structure, homodimer. Fe cation is required as a cofactor.

It participates in secondary metabolite biosynthesis; terpenoid biosynthesis. Iron/alpha-ketoglutarate-dependent dioxygenase; part of the gene cluster that mediates the biosynthesis of calidodehydroaustin, a fungal meroterpenoid. The first step of the pathway is the synthesis of 3,5-dimethylorsellinic acid by the polyketide synthase ausA. 3,5-dimethylorsellinic acid is then prenylated by the polyprenyl transferase ausN. Further epoxidation by the FAD-dependent monooxygenase ausM and cyclization by the probable terpene cyclase ausL lead to the formation of protoaustinoid A. Protoaustinoid A is then oxidized to spiro-lactone preaustinoid A3 by the combined action of the FAD-binding monooxygenases ausB and ausC, and the dioxygenase ausE. Acid-catalyzed keto-rearrangement and ring contraction of the tetraketide portion of preaustinoid A3 by ausJ lead to the formation of preaustinoid A4. The aldo-keto reductase ausK, with the help of ausH, is involved in the next step by transforming preaustinoid A4 into isoaustinone which is in turn hydroxylated by the P450 monooxygenase ausI to form austinolide. The cytochrome P450 monooxygenase ausG modifies austinolide to austinol. Austinol is further acetylated to austin by the O-acetyltransferase ausP, which spontaneously changes to dehydroaustin. The cytochrome P450 monooxygenase ausR then converts dehydroaustin is into 7-dehydrodehydroaustin. The hydroxylation catalyzed by ausR permits the O-acetyltransferase ausQ to add an additional acetyl group to the molecule, leading to the formation of acetoxydehydroaustin. The short chain dehydrogenase ausT catalyzes the reduction of the double bond present between carbon atoms 1 and 2 to convert 7-dehydrodehydroaustin into 1,2-dihydro-7-hydroxydehydroaustin. AusQ catalyzes not only an acetylation reaction but also the addition of the PKS ausV diketide product to 1,2-dihydro-7-hydroxydehydroaustin, forming precalidodehydroaustin. Finally, the iron/alpha-ketoglutarate-dependent dioxygenase converts precalidodehydroaustin into calidodehydroaustin. The sequence is that of Iron/alpha-ketoglutarate-dependent dioxygenase ausU from Aspergillus calidoustus.